The chain runs to 377 residues: Chaperone protein DnaJ (377 aa).

In terms of domain architecture, J spans 5–69 (EFYDRLGVSK…QKRSAYDQYG (65 aa)). The CR-type zinc-finger motif lies at 133 to 215 (GVEKDVSYHR…CHGTGHEKET (83 aa)). Cysteine 146, cysteine 149, cysteine 163, cysteine 166, cysteine 189, cysteine 192, cysteine 203, and cysteine 206 together coordinate Zn(2+). CXXCXGXG motif repeat units lie at residues 146 to 153 (CHTCAGSG), 163 to 170 (CGRCHGSG), 189 to 196 (CDVCHGSG), and 203 to 210 (CQTCHGTG).

This sequence belongs to the DnaJ family. In terms of assembly, homodimer. Requires Zn(2+) as cofactor.

The protein resides in the cytoplasm. Participates actively in the response to hyperosmotic and heat shock by preventing the aggregation of stress-denatured proteins and by disaggregating proteins, also in an autonomous, DnaK-independent fashion. Unfolded proteins bind initially to DnaJ; upon interaction with the DnaJ-bound protein, DnaK hydrolyzes its bound ATP, resulting in the formation of a stable complex. GrpE releases ADP from DnaK; ATP binding to DnaK triggers the release of the substrate protein, thus completing the reaction cycle. Several rounds of ATP-dependent interactions between DnaJ, DnaK and GrpE are required for fully efficient folding. Also involved, together with DnaK and GrpE, in the DNA replication of plasmids through activation of initiation proteins. In Streptococcus uberis (strain ATCC BAA-854 / 0140J), this protein is Chaperone protein DnaJ.